A 98-amino-acid polypeptide reads, in one-letter code: Large ribosomal subunit protein uL23 (98 aa).

This sequence belongs to the universal ribosomal protein uL23 family. Part of the 50S ribosomal subunit. Contacts protein L29, and trigger factor when it is bound to the ribosome.

In terms of biological role, one of the early assembly proteins it binds 23S rRNA. One of the proteins that surrounds the polypeptide exit tunnel on the outside of the ribosome. Forms the main docking site for trigger factor binding to the ribosome. The sequence is that of Large ribosomal subunit protein uL23 from Clostridium beijerinckii (strain ATCC 51743 / NCIMB 8052) (Clostridium acetobutylicum).